The following is a 189-amino-acid chain: Probable nicotinate-nucleotide adenylyltransferase (189 aa).

Belongs to the NadD family.

It catalyses the reaction nicotinate beta-D-ribonucleotide + ATP + H(+) = deamido-NAD(+) + diphosphate. It functions in the pathway cofactor biosynthesis; NAD(+) biosynthesis; deamido-NAD(+) from nicotinate D-ribonucleotide: step 1/1. Catalyzes the reversible adenylation of nicotinate mononucleotide (NaMN) to nicotinic acid adenine dinucleotide (NaAD). The polypeptide is Probable nicotinate-nucleotide adenylyltransferase (Staphylococcus aureus (strain MRSA252)).